The primary structure comprises 1442 residues: ABC transporter G family member 35 (1442 aa).

The ABC transporter 1 domain occupies 169–442; sequence LGMIGIRLAK…FESFGFKCPE (274 aa). ATP is bound at residue 202-209; it reads GPPSSGKT. The 214-residue stretch at 520–733 folds into the ABC transmembrane type-2 1 domain; the sequence is ELLKSCWDKE…AFNAITVNEL (214 aa). Helical transmembrane passes span 538-558, 573-593, 619-639, 657-677, 683-703, 714-734, and 769-789; these read FFYV…STLY, IYVG…LAEM, LPTF…WMVV, FLII…IAST, IANT…GFLL, WAYW…NELF, and IGVG…TLAL. The region spanning 840 to 1092 is the ABC transporter 2 domain; that stretch reads MSFDDVKYFV…KVVEYFESFP (253 aa). Residue 885–892 participates in ATP binding; sequence GVSGAGKT. In terms of domain architecture, ABC transmembrane type-2 2 spans 1165 to 1379; the sequence is GQFKSCLWKQ…TIYGLITSQY (215 aa). Transmembrane regions (helical) follow at residues 1186-1206, 1218-1238, 1272-1292, 1299-1319, 1329-1349, 1357-1377, and 1414-1434; these read LVRF…FWQI, MVIG…CSTV, LPYV…MVGF, FLWF…YGMM, VASI…GFFI, WWVW…LITS, and PVAG…AFCI.

The protein belongs to the ABC transporter superfamily. ABCG family. PDR (TC 3.A.1.205) subfamily. As to expression, ubiquitous with higher levels in roots.

Its subcellular location is the membrane. Functionally, may be a general defense protein. The protein is ABC transporter G family member 35 (ABCG35) of Arabidopsis thaliana (Mouse-ear cress).